The following is a 739-amino-acid chain: Phosphoribosylformylglycinamidine synthase subunit PurL (739 aa).

Histidine 53 is an active-site residue. Residues tyrosine 56 and lysine 95 each contribute to the ATP site. Glutamate 97 serves as a coordination point for Mg(2+). Substrate is bound by residues 98–101 (SHNH) and arginine 120. Catalysis depends on histidine 99, which acts as the Proton acceptor. Residue aspartate 121 participates in Mg(2+) binding. Glutamine 244 serves as a coordination point for substrate. Aspartate 274 contributes to the Mg(2+) binding site. 318-320 (ESQ) is a substrate binding site. ATP-binding residues include aspartate 501 and glycine 538. Mg(2+) is bound at residue asparagine 539. Residue serine 541 coordinates substrate.

Belongs to the FGAMS family. Monomer. Part of the FGAM synthase complex composed of 1 PurL, 1 PurQ and 2 PurS subunits.

The protein localises to the cytoplasm. The enzyme catalyses N(2)-formyl-N(1)-(5-phospho-beta-D-ribosyl)glycinamide + L-glutamine + ATP + H2O = 2-formamido-N(1)-(5-O-phospho-beta-D-ribosyl)acetamidine + L-glutamate + ADP + phosphate + H(+). Its pathway is purine metabolism; IMP biosynthesis via de novo pathway; 5-amino-1-(5-phospho-D-ribosyl)imidazole from N(2)-formyl-N(1)-(5-phospho-D-ribosyl)glycinamide: step 1/2. Functionally, part of the phosphoribosylformylglycinamidine synthase complex involved in the purines biosynthetic pathway. Catalyzes the ATP-dependent conversion of formylglycinamide ribonucleotide (FGAR) and glutamine to yield formylglycinamidine ribonucleotide (FGAM) and glutamate. The FGAM synthase complex is composed of three subunits. PurQ produces an ammonia molecule by converting glutamine to glutamate. PurL transfers the ammonia molecule to FGAR to form FGAM in an ATP-dependent manner. PurS interacts with PurQ and PurL and is thought to assist in the transfer of the ammonia molecule from PurQ to PurL. The sequence is that of Phosphoribosylformylglycinamidine synthase subunit PurL from Listeria monocytogenes serovar 1/2a (strain ATCC BAA-679 / EGD-e).